A 286-amino-acid polypeptide reads, in one-letter code: 4-hydroxybenzoate octaprenyltransferase (286 aa).

7 helical membrane-spanning segments follow: residues 20–40 (IGTL…AGGM), 43–63 (LKVL…GCII), 95–115 (ILFA…NPLV), 142–162 (FLGV…TGEV), 167–187 (WWLF…YAMV), 210–230 (QIIG…GWAA), and 234–254 (LVYG…QKLI).

The protein belongs to the UbiA prenyltransferase family. The cofactor is Mg(2+).

The protein localises to the cell inner membrane. It catalyses the reaction all-trans-octaprenyl diphosphate + 4-hydroxybenzoate = 4-hydroxy-3-(all-trans-octaprenyl)benzoate + diphosphate. Its pathway is cofactor biosynthesis; ubiquinone biosynthesis. Functionally, catalyzes the prenylation of para-hydroxybenzoate (PHB) with an all-trans polyprenyl group. Mediates the second step in the final reaction sequence of ubiquinone-8 (UQ-8) biosynthesis, which is the condensation of the polyisoprenoid side chain with PHB, generating the first membrane-bound Q intermediate 3-octaprenyl-4-hydroxybenzoate. This chain is 4-hydroxybenzoate octaprenyltransferase, found in Shewanella sediminis (strain HAW-EB3).